Reading from the N-terminus, the 157-residue chain is uncharacterized protein (157 aa).

In terms of biological role, may be a DNA-binding protein involved in virion nucleoprotein condensation. This is an uncharacterized protein from Mycoplasma (Bacteriophage L2).